The following is a 119-amino-acid chain: Phosphoribosyl-AMP cyclohydrolase (119 aa).

Residue Asp-78 participates in Mg(2+) binding. Residue Cys-79 participates in Zn(2+) binding. Residues Asp-80 and Asp-82 each contribute to the Mg(2+) site. The Zn(2+) site is built by Cys-95 and Cys-102.

Belongs to the PRA-CH family. Homodimer. The cofactor is Mg(2+). Zn(2+) is required as a cofactor.

It is found in the cytoplasm. The enzyme catalyses 1-(5-phospho-beta-D-ribosyl)-5'-AMP + H2O = 1-(5-phospho-beta-D-ribosyl)-5-[(5-phospho-beta-D-ribosylamino)methylideneamino]imidazole-4-carboxamide. It participates in amino-acid biosynthesis; L-histidine biosynthesis; L-histidine from 5-phospho-alpha-D-ribose 1-diphosphate: step 3/9. Its function is as follows. Catalyzes the hydrolysis of the adenine ring of phosphoribosyl-AMP. The protein is Phosphoribosyl-AMP cyclohydrolase of Jannaschia sp. (strain CCS1).